Reading from the N-terminus, the 325-residue chain is Tetraacyldisaccharide 4'-kinase (325 aa).

53 to 60 serves as a coordination point for ATP; the sequence is SVGGNGKT.

Belongs to the LpxK family.

The catalysed reaction is a lipid A disaccharide + ATP = a lipid IVA + ADP + H(+). It functions in the pathway glycolipid biosynthesis; lipid IV(A) biosynthesis; lipid IV(A) from (3R)-3-hydroxytetradecanoyl-[acyl-carrier-protein] and UDP-N-acetyl-alpha-D-glucosamine: step 6/6. Functionally, transfers the gamma-phosphate of ATP to the 4'-position of a tetraacyldisaccharide 1-phosphate intermediate (termed DS-1-P) to form tetraacyldisaccharide 1,4'-bis-phosphate (lipid IVA). This Pasteurella multocida (strain Pm70) protein is Tetraacyldisaccharide 4'-kinase.